The chain runs to 149 residues: MICLLQRVTHGSVSVSNETIGQISSGLVVLCGFQPHDTTESLEKMAHKLLHYRVFSDEDDKMNLNLQQAFSGKGGDLLLVPQFTLAADTKKGLRPSFHTSASPDLAHNLFNEFVALITLKFGPPQTGKFGANMQVSLINDGPVTFWLET.

Residues 141–142 (GP) carry the Gly-cisPro motif, important for rejection of L-amino acids motif.

Belongs to the DTD family. Homodimer.

It localises to the cytoplasm. The enzyme catalyses glycyl-tRNA(Ala) + H2O = tRNA(Ala) + glycine + H(+). It catalyses the reaction a D-aminoacyl-tRNA + H2O = a tRNA + a D-alpha-amino acid + H(+). Its function is as follows. An aminoacyl-tRNA editing enzyme that deacylates mischarged D-aminoacyl-tRNAs. Also deacylates mischarged glycyl-tRNA(Ala), protecting cells against glycine mischarging by AlaRS. Acts via tRNA-based rather than protein-based catalysis; rejects L-amino acids rather than detecting D-amino acids in the active site. By recycling D-aminoacyl-tRNA to D-amino acids and free tRNA molecules, this enzyme counteracts the toxicity associated with the formation of D-aminoacyl-tRNA entities in vivo and helps enforce protein L-homochirality. This Hydrogenovibrio crunogenus (strain DSM 25203 / XCL-2) (Thiomicrospira crunogena) protein is D-aminoacyl-tRNA deacylase.